The sequence spans 346 residues: uncharacterized protein (346 aa).

The segment at 321–346 (TPWGTHSVAGVGPPPYARSGPASATT) is disordered.

This is an uncharacterized protein from Mycobacterium tuberculosis (strain CDC 1551 / Oshkosh).